A 1856-amino-acid polypeptide reads, in one-letter code: Autophagy-related protein 2 (1856 aa).

7 disordered regions span residues 123-167, 229-283, 309-328, 395-428, 1157-1177, 1614-1647, and 1719-1741; these read NTND…TGNK, LRTL…GNES, KSAA…DKED, TKSR…DASH, LNGT…SSLM, MLGG…VEVA, and KLQP…EDED. Positions 137 to 147 are enriched in acidic residues; sequence ASEDDDEDDID. The span at 250-262 shows a compositional bias: polar residues; it reads KKQQGSDNDSPTD. The span at 270–280 shows a compositional bias: acidic residues; that stretch reads NDNDDDDDDYG. Over residues 412–424 the composition is skewed to acidic residues; sequence DNDEIPEDQSESD. Residues 1157-1170 show a composition bias toward low complexity; sequence LNGTENGSTSESSS. Polar residues predominate over residues 1621 to 1639; that stretch reads SVRSPNLGGSDNRRNSNAS. Residues 1732-1741 are compositionally biased toward acidic residues; the sequence is TEEEEDEDED.

It belongs to the ATG2 family.

It localises to the preautophagosomal structure membrane. The protein resides in the endoplasmic reticulum membrane. The enzyme catalyses a 1,2-diacyl-sn-glycero-3-phosphocholine(in) = a 1,2-diacyl-sn-glycero-3-phosphocholine(out). The catalysed reaction is a 1,2-diacyl-sn-glycero-3-phospho-L-serine(in) = a 1,2-diacyl-sn-glycero-3-phospho-L-serine(out). It catalyses the reaction a 1,2-diacyl-sn-glycero-3-phosphoethanolamine(in) = a 1,2-diacyl-sn-glycero-3-phosphoethanolamine(out). In terms of biological role, lipid transfer protein required for autophagosome completion and peroxisome degradation. Tethers the edge of the isolation membrane (IM) to the endoplasmic reticulum (ER) and mediates direct lipid transfer from ER to IM for IM expansion. ATG2/SPO72 binds to the ER exit site (ERES), which is the membrane source for autophagosome formation, using basic residues in its N-terminal region (NR) and to the expanding edge of the IM through its C-terminal region. The latter binding is assisted by an ATG18-PtdIns3P interaction. ATG2/SPO72 then extracts phospholipids from the membrane source using its NR and transfers them to ATG9 to the IM through its predicted beta-sheet-rich structure for membrane expansion. This Candida albicans (strain SC5314 / ATCC MYA-2876) (Yeast) protein is Autophagy-related protein 2 (SPO72).